The sequence spans 21 residues: 40 kDa major outer membrane protein (21 aa).

In terms of assembly, disulfide bond interactions within and between MOMP molecules and other components form high molecular-weight oligomers.

The protein localises to the cell outer membrane. Functionally, structural rigidity of the outer membrane of elementary bodies and porin forming, permitting diffusion of solutes through the intracellular reticulate body membrane. The chain is 40 kDa major outer membrane protein from Actinobacillus pleuropneumoniae (Haemophilus pleuropneumoniae).